Consider the following 323-residue polypeptide: Quinolinate synthase (323 aa).

Iminosuccinate is bound by residues H39 and S56. C101 serves as a coordination point for [4Fe-4S] cluster. Residues 127-129 and S144 contribute to the iminosuccinate site; that span reads YIN. A [4Fe-4S] cluster-binding site is contributed by C187. Residues 213 to 215 and T230 each bind iminosuccinate; that span reads HPE. [4Fe-4S] cluster is bound at residue C280.

This sequence belongs to the quinolinate synthase family. Type 2 subfamily. [4Fe-4S] cluster is required as a cofactor.

It is found in the cytoplasm. The catalysed reaction is iminosuccinate + dihydroxyacetone phosphate = quinolinate + phosphate + 2 H2O + H(+). It functions in the pathway cofactor biosynthesis; NAD(+) biosynthesis; quinolinate from iminoaspartate: step 1/1. Catalyzes the condensation of iminoaspartate with dihydroxyacetone phosphate to form quinolinate. The chain is Quinolinate synthase from Chlorobium phaeobacteroides (strain DSM 266 / SMG 266 / 2430).